Here is a 419-residue protein sequence, read N- to C-terminus: N-acylglucosamine 2-epimerase (419 aa).

Residues 185-206 form a leucine-zipper region; sequence LLNLVEQLGEEDEEMTDKYAEL. Ser418 carries the phosphoserine modification.

This sequence belongs to the N-acylglucosamine 2-epimerase family. Homodimer. Forms a heterodimer with renin and inhibits its activity. In terms of tissue distribution, kidney, adrenal gland, brain, lung, spleen, ovary, testis and heart.

It catalyses the reaction an N-acyl-D-glucosamine = an N-acyl-D-mannosamine. Its pathway is amino-sugar metabolism; N-acetylneuraminate degradation. Its function is as follows. Catalyzes the interconversion of N-acetylglucosamine to N-acetylmannosamine. Involved in the N-glycolylneuraminic acid (Neu5Gc) degradation pathway. The polypeptide is N-acylglucosamine 2-epimerase (Renbp) (Rattus norvegicus (Rat)).